Reading from the N-terminus, the 102-residue chain is Small ribosomal subunit protein bS6 (102 aa).

Belongs to the bacterial ribosomal protein bS6 family.

Functionally, binds together with bS18 to 16S ribosomal RNA. This Deinococcus deserti (strain DSM 17065 / CIP 109153 / LMG 22923 / VCD115) protein is Small ribosomal subunit protein bS6.